Reading from the N-terminus, the 171-residue chain is Ribosome maturation factor RimM (171 aa).

The PRC barrel domain occupies 97 to 169 (DGEFYYHEII…RVDVDIMEGL (73 aa)).

The protein belongs to the RimM family. As to quaternary structure, binds ribosomal protein uS19.

It is found in the cytoplasm. An accessory protein needed during the final step in the assembly of 30S ribosomal subunit, possibly for assembly of the head region. Essential for efficient processing of 16S rRNA. May be needed both before and after RbfA during the maturation of 16S rRNA. It has affinity for free ribosomal 30S subunits but not for 70S ribosomes. The sequence is that of Ribosome maturation factor RimM from Lactococcus lactis subsp. cremoris (strain MG1363).